We begin with the raw amino-acid sequence, 280 residues long: MATEAPVNIAPPECSTVVSTAVDSLIWQPNSLNMHMIRPKSAKGRTRPSLQKSQGVEVCAHHIPSPPPAIPYELPSSQKPGACAPKSPNQGASDEIPELQQQVPTGASSSLNKYPVLPSINRKNLEEEAVETVAKKASSLQLSSIRALYQDETGTMKTSEEDSRARACAVERKFIVRTKKQGSSRAGNLEEPSDQEPRLLLAVRSPTGQRFVRHFRPTDDLQTIVAVAEQKNKTSYRHCSIETMEVPRRRFSDLTKSLQECRIPHKSVLGISLEDGEGWP.

The interval 41–94 (SAKGRTRPSLQKSQGVEVCAHHIPSPPPAIPYELPSSQKPGACAPKSPNQGASD) is disordered. A Phosphoserine modification is found at Ser-87. In terms of domain architecture, UBX spans 194–271 (DQEPRLLLAV…RIPHKSVLGI (78 aa)).

Belongs to the UBXN10 family. In terms of assembly, interacts with CLUAP1; the interaction is direct and mediates interaction with the intraflagellar transport complex B (IFT-B). Interacts with VCP; the interaction is direct.

Its subcellular location is the cell projection. It is found in the cilium. VCP/p97-binding protein required for ciliogenesis. Acts as a tethering factor that facilitates recruitment of VCP/p97 to the intraflagellar transport complex B (IFT-B) in cilia. UBX domain-containing proteins act as tethering factors for VCP/p97 and may specify substrate specificity of VCP/p97. This is UBX domain-containing protein 10 from Homo sapiens (Human).